The following is a 501-amino-acid chain: Phosphoethanolamine N-methyltransferase 1 (501 aa).

6 residues coordinate S-adenosyl-L-homocysteine: Gly72, Arg77, Asp93, Asp118, Val119, and Asn137. The phosphocholine site is built by Ser170, Thr175, Gly176, Arg180, and Tyr187. N-methylethanolamine phosphate-binding positions include 256-257 (QY) and Tyr265. Phosphocholine is bound at residue Tyr265. S-adenosyl-L-homocysteine contacts are provided by Val274, Ser275, Gly301, Asp323, Asp349, Cys350, and Arg366. Tyr397, Tyr411, Arg415, Tyr417, and Lys483 together coordinate phosphocholine. N-methylethanolamine phosphate contacts are provided by residues Tyr397, Tyr411, 415–417 (RGY), and Lys483.

The protein belongs to the class I-like SAM-binding methyltransferase superfamily. PEAMT family.

The enzyme catalyses phosphoethanolamine + S-adenosyl-L-methionine = N-methylethanolamine phosphate + S-adenosyl-L-homocysteine + H(+). It catalyses the reaction N-methylethanolamine phosphate + S-adenosyl-L-methionine = N,N-dimethylethanolamine phosphate + S-adenosyl-L-homocysteine + H(+). It carries out the reaction N,N-dimethylethanolamine phosphate + S-adenosyl-L-methionine = phosphocholine + S-adenosyl-L-homocysteine + H(+). The protein operates within phospholipid metabolism; phosphatidylcholine biosynthesis; phosphocholine from phosphoethanolamine: step 1/1. Its function is as follows. Involved in phosphocholine biosynthesis. Catalyzes the N-methylation of phosphoethanolamine, phosphomonomethylethanolamine and phosphodimethylethanolamine, the three methylation steps required to convert phosphoethanolamine to phosphocholine (PC). May be involved in root development. This is Phosphoethanolamine N-methyltransferase 1 from Zea mays (Maize).